Consider the following 272-residue polypeptide: Ethanolamine ammonia-lyase small subunit (272 aa).

The adenosylcob(III)alamin site is built by V161, E182, and C211.

This sequence belongs to the EutC family. In terms of assembly, the basic unit is a heterodimer which dimerizes to form tetramers. The heterotetramers trimerize; 6 large subunits form a core ring with 6 small subunits projecting outwards. Requires adenosylcob(III)alamin as cofactor.

It is found in the bacterial microcompartment. The catalysed reaction is ethanolamine = acetaldehyde + NH4(+). The protein operates within amine and polyamine degradation; ethanolamine degradation. Its function is as follows. Catalyzes the deamination of various vicinal amino-alcohols to oxo compounds. Allows this organism to utilize ethanolamine as the sole source of nitrogen and carbon in the presence of external vitamin B12. In Xanthomonas campestris pv. campestris (strain ATCC 33913 / DSM 3586 / NCPPB 528 / LMG 568 / P 25), this protein is Ethanolamine ammonia-lyase small subunit.